Here is a 447-residue protein sequence, read N- to C-terminus: UPF0210 protein LBUL_0934 (447 aa).

The protein belongs to the UPF0210 family. As to quaternary structure, homodimer.

This chain is UPF0210 protein LBUL_0934, found in Lactobacillus delbrueckii subsp. bulgaricus (strain ATCC BAA-365 / Lb-18).